A 153-amino-acid polypeptide reads, in one-letter code: Cytochrome c oxidase subunit 5A, mitochondrial (153 aa).

The transit peptide at 1-20 directs the protein to the mitochondrion; the sequence is MLRNTFTRAGGLSRITSVRF. The Mitochondrial matrix segment spans residues 21–88; sequence AQTHALSNAA…EWGPRRPVLN (68 aa). Residues 89–111 traverse the membrane as a helical segment; the sequence is KGDSSFIAKGVAAGLLFSVGLFA. The Mitochondrial intermembrane portion of the chain corresponds to 112-153; the sequence is VVRMAGGQDAKTMNKEWQLKSDEYLKSKNANPWGGYSQVQSK.

Belongs to the cytochrome c oxidase IV family. In terms of assembly, component of the cytochrome c oxidase (complex IV, CIV), a multisubunit enzyme composed of 12 subunits. The complex is composed of a catalytic core of 3 subunits COX1, COX2 and COX3, encoded in the mitochondrial DNA, and 9 supernumerary subunits COX4, COX5A (or COX5B), COX6, COX7, COX8, COX9, COX12, COX13 and COX26, which are encoded in the nuclear genome. COX5A is the predominant subunit V during aerobic/normoxic growth, it gets replaced by COX5B under anaerobic/hypoxic conditions. The complex exists as a monomer or a dimer and forms supercomplexes (SCs) in the inner mitochondrial membrane with a dimer of ubiquinol-cytochrome c oxidoreductase (cytochrome b-c1 complex, complex III, CIII), resulting in 2 different assemblies (supercomplexes III(2)IV and III(2)IV(2)). COX5A interacts with COR1, CYT1 and QCR6 at the CIII-CIV interface.

It localises to the mitochondrion inner membrane. It participates in energy metabolism; oxidative phosphorylation. In terms of biological role, component of the cytochrome c oxidase, the last enzyme in the mitochondrial electron transport chain which drives oxidative phosphorylation. The respiratory chain contains 3 multisubunit complexes succinate dehydrogenase (complex II, CII), ubiquinol-cytochrome c oxidoreductase (cytochrome b-c1 complex, complex III, CIII) and cytochrome c oxidase (complex IV, CIV), that cooperate to transfer electrons derived from NADH and succinate to molecular oxygen, creating an electrochemical gradient over the inner membrane that drives transmembrane transport and the ATP synthase. Cytochrome c oxidase is the component of the respiratory chain that catalyzes the reduction of oxygen to water. Electrons originating from reduced cytochrome c in the intermembrane space (IMS) are transferred via the dinuclear copper A center (CU(A)) of COX2 and heme A of COX1 to the active site in COX1, a binuclear center (BNC) formed by heme A3 and copper B (CU(B)). The BNC reduces molecular oxygen to 2 water molecules using 4 electrons from cytochrome c in the IMS and 4 protons from the mitochondrial matrix. In Saccharomyces cerevisiae (strain ATCC 204508 / S288c) (Baker's yeast), this protein is Cytochrome c oxidase subunit 5A, mitochondrial (COX5A).